The following is a 118-amino-acid chain: Elongin-B (118 aa).

An N-acetylmethionine modification is found at Met-1. A Ubiquitin-like domain is found at 1–79; that stretch reads MDVFLMIRRH…QAPATVGLAF (79 aa). A Phosphothreonine modification is found at Thr-84. The disordered stretch occupies residues 91 to 118; it reads EPFSSPPELPDVMKPQDSGGSANEQAVQ. Phosphoserine occurs at positions 108 and 111. The segment covering 108-118 has biased composition (polar residues); it reads SGGSANEQAVQ.

It belongs to the Elongin B family. As to quaternary structure, heterotrimer of an A (ELOA, ELOA2 or ELOA3P), ELOB and ELOC subunit. The elongin BC complex interacts with EPOP; leading to recruit the elongin BC complex to Polycomb group (PcG) target genes, thereby restricting excessive activity of the PRC2/EED-EZH2 complex. Component of multiple cullin-RING E3 ubiquitin-protein ligase complexes composed of Elongin BC (ELOB and ELOC), a cullin (either CUL2 or CUL5), a catalytic subunit (either RBX1 or RNF7/RBX2), as well as a substrate adapter protein that can be either ASB2, ASB9, ASB11, KLHDC2, KLHDC3, KLHDC10, APPBP2, FEM1A, FEM1B, FEM1C, LRR1, PCMTD1, SOCS1, SOCS2, SOCS5, SPSB1, SPSB3, ELOA, VHL, WSB1 or RAB40C. As part of the Elongin BC E3 ubiquitin ligase complex; interacts with NRBP1. May also interact with DCUN1D1, DCUN1D2, DCUN1D3 and DCUN1D5. May form oligomers as a KLHDC2/KLHDC3-ELOB-ELOC complex; this interaction is autoinhibitory for the E3 ligase complex as the substrate-binding site of KLHDC2/KLHDC3 is blocked in the oligomer.

Its subcellular location is the nucleus. It participates in protein modification; protein ubiquitination. Functionally, SIII, also known as elongin, is a general transcription elongation factor that increases the RNA polymerase II transcription elongation past template-encoded arresting sites. Subunit A is transcriptionally active and its transcription activity is strongly enhanced by binding to the dimeric complex of the SIII regulatory subunits B and C (elongin BC complex). In embryonic stem cells, the elongin BC complex is recruited by EPOP to Polycomb group (PcG) target genes in order generate genomic region that display both active and repressive chromatin properties, an important feature of pluripotent stem cells. Core component of multiple cullin-2 and cullin-5-RING E3 ubiquitin-protein ligase complexes (ECS complexes), which mediate the ubiquitination of target proteins. By binding to BC-box motifs it seems to link target recruitment subunits, like VHL and members of the SOCS box family, to Cullin/RBX1 modules that activate E2 ubiquitination enzymes. Component the von Hippel-Lindau ubiquitination complex CBC(VHL). A number of ECS complexes (containing either KLHDC2, KLHDC3, KLHDC10, APPBP2, FEM1A, FEM1B or FEM1C as substrate-recognition component) are part of the DesCEND (destruction via C-end degrons) pathway, which recognizes a C-degron located at the extreme C terminus of target proteins, leading to their ubiquitination and degradation. The ECS(ASB9) complex mediates ubiquitination and degradation of CKB. As part of a multisubunit ubiquitin ligase complex, polyubiquitinates monoubiquitinated POLR2A. ECS(LRR1) ubiquitinates MCM7 and promotes CMG replisome disassembly by VCP and chromatin extraction during S-phase. As part of the ECS(RAB40C) complex, mediates ANKRD28 ubiquitination and degradation, thereby inhibiting protein phosphatase 6 (PP6) complex activity and focal adhesion assembly during cell migration. The polypeptide is Elongin-B (Mus musculus (Mouse)).